Consider the following 114-residue polypeptide: Anti-adapter protein IraM (114 aa).

The protein belongs to the IraM/RssC family.

It localises to the cytoplasm. In terms of biological role, involved in the stabilization of the sigma stress factor RpoS. This Citrobacter koseri (strain ATCC BAA-895 / CDC 4225-83 / SGSC4696) protein is Anti-adapter protein IraM.